The primary structure comprises 240 residues: Ribose-5-phosphate isomerase A (240 aa).

Substrate is bound by residues 41–44 (TGST), 94–97 (DGAD), and 107–110 (KGGG). Residue E116 is the Proton acceptor of the active site. K134 is a binding site for substrate.

It belongs to the ribose 5-phosphate isomerase family. In terms of assembly, homodimer.

The enzyme catalyses aldehydo-D-ribose 5-phosphate = D-ribulose 5-phosphate. Its pathway is carbohydrate degradation; pentose phosphate pathway; D-ribose 5-phosphate from D-ribulose 5-phosphate (non-oxidative stage): step 1/1. Catalyzes the reversible conversion of ribose-5-phosphate to ribulose 5-phosphate. In Polaromonas sp. (strain JS666 / ATCC BAA-500), this protein is Ribose-5-phosphate isomerase A.